We begin with the raw amino-acid sequence, 862 residues long: Rab GTPase-binding effector protein 1 (862 aa).

A2 carries the post-translational modification N-acetylalanine. Positions 11–328 (DVSLQQRVAE…KDQEEDEQQR (318 aa)) form a coiled coil. K282 bears the N6-acetyllysine mark. Disordered stretches follow at residues 315 to 340 (ELKK…KIDT) and 355 to 374 (EESS…THGS). A phosphoserine mark is found at S374, S377, and S407. A Phosphothreonine modification is found at T408. S410 is modified (phosphoserine). The stretch at 534–816 (DMCSNYEKQL…LQTELDVSEQ (283 aa)) forms a coiled coil.

The protein belongs to the rabaptin family. As to quaternary structure, heterodimer with RABGEF1. The heterodimer binds RAB4A and RAB5A that have been activated by GTP-binding. Interacts with TSC2. Interacts with GGA1 (via GAE domain), GGA2 (via GAE domain) and GGA3 (via GAE domain). Interacts with AP1G1 (via GAE domain). Interacts with AP1G2 (via GAE domain). Interacts with ECPAS. Interacts with KCNH1. Interacts with PKD1 (via C-terminal domain) and GGA1; the interactions recruit PKD1:PKD2 complex to GGA1 and ARL3 at trans-Golgi network. Interacts with KCNH1. Proteolytic cleavage by caspases in apoptotic cells causes loss of endosome fusion activity.

It is found in the cytoplasm. Its subcellular location is the early endosome. The protein localises to the recycling endosome. The protein resides in the cytoplasmic vesicle. Rab effector protein acting as linker between gamma-adaptin, RAB4A and RAB5A. Involved in endocytic membrane fusion and membrane trafficking of recycling endosomes. Involved in KCNH1 channels trafficking to and from the cell membrane. Stimulates RABGEF1 mediated nucleotide exchange on RAB5A. Mediates the traffic of PKD1:PKD2 complex from the endoplasmic reticulum through the Golgi to the cilium. This Rattus norvegicus (Rat) protein is Rab GTPase-binding effector protein 1 (Rabep1).